Consider the following 138-residue polypeptide: Small ribosomal subunit protein uS11c (138 aa).

The tract at residues 1-22 (MAKPILRIGSRKNTRSGSRKNV) is disordered. Residues 9–22 (GSRKNTRSGSRKNV) are compositionally biased toward basic residues.

Belongs to the universal ribosomal protein uS11 family. Part of the 30S ribosomal subunit.

The protein resides in the plastid. It localises to the chloroplast. The polypeptide is Small ribosomal subunit protein uS11c (Arabis hirsuta (Hairy rock-cress)).